The following is a 225-amino-acid chain: Sugar fermentation stimulation protein homolog (225 aa).

It belongs to the SfsA family.

The polypeptide is Sugar fermentation stimulation protein homolog (Sulfurisphaera tokodaii (strain DSM 16993 / JCM 10545 / NBRC 100140 / 7) (Sulfolobus tokodaii)).